The chain runs to 300 residues: FeMo cofactor biosynthesis protein NifB (300 aa).

In terms of domain architecture, Radical SAM core spans 24-266 (HDKVGRVHLP…PQFRACGQCR (243 aa)). Residues C38, C42, and C45 each coordinate [4Fe-4S] cluster. S-adenosyl-L-methionine-binding residues include G93, T144, and I196. Residues C262 and C265 each contribute to the [4Fe-4S] cluster site.

The protein belongs to the radical SAM superfamily. NifB family. In terms of assembly, monomer. The cofactor is [4Fe-4S] cluster.

The protein operates within cofactor biosynthesis; Fe-Mo cofactor biosynthesis. In terms of biological role, involved in the biosynthesis of the iron-molybdenum cofactor (FeMo-co or M-cluster) found in the dinitrogenase enzyme of the nitrogenase complex in nitrogen-fixing microorganisms. NifB catalyzes the crucial step of radical SAM-dependent carbide insertion that occurs concomitant with the insertion of a 9th sulfur and the rearrangement/coupling of two [4Fe-4S] clusters into a [8Fe-9S-C] cluster, the precursor to the M-cluster. The chain is FeMo cofactor biosynthesis protein NifB from Methanocaldococcus jannaschii (strain ATCC 43067 / DSM 2661 / JAL-1 / JCM 10045 / NBRC 100440) (Methanococcus jannaschii).